Here is a 504-residue protein sequence, read N- to C-terminus: Maturase K (504 aa).

This sequence belongs to the intron maturase 2 family. MatK subfamily.

It localises to the plastid. It is found in the chloroplast. Usually encoded in the trnK tRNA gene intron. Probably assists in splicing its own and other chloroplast group II introns. In Turritis glabra (Tower mustard), this protein is Maturase K.